The primary structure comprises 40 residues: Dolichyl-diphosphooligosaccharide--protein glycosyltransferase subunit 4 (40 aa).

Residues 1-4 lie on the Lumenal side of the membrane; sequence MITD. The helical transmembrane segment at 5 to 25 threads the bilayer; it reads VQLAIFSNVLGVFLFLLVVAY. The Cytoplasmic segment spans residues 26–40; the sequence is HYINANTGKIGPKAK.

This sequence belongs to the OST4 family. Component of the oligosaccharyltransferase (OST) complex.

The protein resides in the endoplasmic reticulum membrane. In terms of biological role, subunit of the oligosaccharyl transferase (OST) complex that catalyzes the initial transfer of a defined glycan (Glc(3)Man(9)GlcNAc(2) in eukaryotes) from the lipid carrier dolichol-pyrophosphate to an asparagine residue within an Asn-X-Ser/Thr consensus motif in nascent polypeptide chains, the first step in protein N-glycosylation. N-glycosylation occurs cotranslationally and the complex associates with the Sec61 complex at the channel-forming translocon complex that mediates protein translocation across the endoplasmic reticulum (ER). All subunits are required for a maximal enzyme activity. In Drosophila willistoni (Fruit fly), this protein is Dolichyl-diphosphooligosaccharide--protein glycosyltransferase subunit 4.